Reading from the N-terminus, the 498-residue chain is Galactose-1-phosphate uridylyltransferase (498 aa).

This sequence belongs to the galactose-1-phosphate uridylyltransferase type 2 family.

The protein resides in the cytoplasm. The catalysed reaction is alpha-D-galactose 1-phosphate + UDP-alpha-D-glucose = alpha-D-glucose 1-phosphate + UDP-alpha-D-galactose. The protein operates within carbohydrate metabolism; galactose metabolism. The chain is Galactose-1-phosphate uridylyltransferase from Staphylococcus carnosus (strain TM300).